Reading from the N-terminus, the 291-residue chain is Transmembrane protein 41B (291 aa).

Over residues 1–11 (MAKGRVADRSP) the composition is skewed to basic and acidic residues. The interval 1–43 (MAKGRVADRSPTEMLHSTPAGDRAVRTQGSAAPGSKDHLNEKP) is disordered. Thr-18 bears the Phosphothreonine mark. Residue Ser-35 is modified to Phosphoserine. Transmembrane regions (helical) follow at residues 52-72 (TSLL…FLVY), 109-129 (FYVQ…TFAI), 147-169 (LALF…LSYL), 197-217 (LINY…FINI), 225-245 (PLKV…FVAI), and 262-282 (SWSS…PAIF). The VTT domain; required for its function in autophagy stretch occupies residues 140 to 251 (GFLYPFPLAL…FVAIKAGTTL (112 aa)).

Belongs to the TMEM41 family. In terms of assembly, interacts with VMP1. Interacts with COPA, COPB1, VDAC1 and ERLIN2. Interacts with ATG2A. Interacts with SURF4. As to expression, expressed in brain, spinal cord, kidney and first lumbar dorsal root ganglia during postnatal development. Expressed in motor neurons and proprioceptive neurons.

It is found in the endoplasmic reticulum membrane. Its subcellular location is the endomembrane system. The enzyme catalyses a 1,2-diacyl-sn-glycero-3-phospho-L-serine(in) = a 1,2-diacyl-sn-glycero-3-phospho-L-serine(out). It catalyses the reaction cholesterol(in) = cholesterol(out). It carries out the reaction a 1,2-diacyl-sn-glycero-3-phosphocholine(in) = a 1,2-diacyl-sn-glycero-3-phosphocholine(out). The catalysed reaction is a 1,2-diacyl-sn-glycero-3-phosphoethanolamine(in) = a 1,2-diacyl-sn-glycero-3-phosphoethanolamine(out). Functionally, phospholipid scramblase involved in lipid homeostasis and membrane dynamics processes. Has phospholipid scramblase activity toward cholesterol and phosphatidylserine, as well as phosphatidylethanolamine and phosphatidylcholine. Required for autophagosome formation: participates in early stages of autophagosome biogenesis at the endoplasmic reticulum (ER) membrane by reequilibrating the leaflets of the ER as lipids are extracted by ATG2 (ATG2A or ATG2B) to mediate autophagosome assembly. In addition to autophagy, involved in other processes in which phospholipid scramblase activity is required. Required for normal motor neuron development. In Mus musculus (Mouse), this protein is Transmembrane protein 41B.